Consider the following 355-residue polypeptide: Holliday junction branch migration complex subunit RuvB (355 aa).

The interval methionine 1 to proline 26 is disordered. The segment at threonine 5–tyrosine 196 is large ATPase domain (RuvB-L). Over residues alanine 9–alanine 22 the composition is skewed to low complexity. ATP contacts are provided by residues leucine 35, arginine 36, glycine 77, lysine 80, threonine 81, threonine 82, glutamate 143–tyrosine 145, arginine 186, tyrosine 196, and arginine 233. A Mg(2+)-binding site is contributed by threonine 81. Residues serine 197–aspartate 267 are small ATPAse domain (RuvB-S). Positions proline 270–alanine 355 are head domain (RuvB-H). DNA-binding residues include arginine 325 and arginine 330.

Belongs to the RuvB family. In terms of assembly, homohexamer. Forms an RuvA(8)-RuvB(12)-Holliday junction (HJ) complex. HJ DNA is sandwiched between 2 RuvA tetramers; dsDNA enters through RuvA and exits via RuvB. An RuvB hexamer assembles on each DNA strand where it exits the tetramer. Each RuvB hexamer is contacted by two RuvA subunits (via domain III) on 2 adjacent RuvB subunits; this complex drives branch migration. In the full resolvosome a probable DNA-RuvA(4)-RuvB(12)-RuvC(2) complex forms which resolves the HJ.

The protein resides in the cytoplasm. The enzyme catalyses ATP + H2O = ADP + phosphate + H(+). Its function is as follows. The RuvA-RuvB-RuvC complex processes Holliday junction (HJ) DNA during genetic recombination and DNA repair, while the RuvA-RuvB complex plays an important role in the rescue of blocked DNA replication forks via replication fork reversal (RFR). RuvA specifically binds to HJ cruciform DNA, conferring on it an open structure. The RuvB hexamer acts as an ATP-dependent pump, pulling dsDNA into and through the RuvAB complex. RuvB forms 2 homohexamers on either side of HJ DNA bound by 1 or 2 RuvA tetramers; 4 subunits per hexamer contact DNA at a time. Coordinated motions by a converter formed by DNA-disengaged RuvB subunits stimulates ATP hydrolysis and nucleotide exchange. Immobilization of the converter enables RuvB to convert the ATP-contained energy into a lever motion, pulling 2 nucleotides of DNA out of the RuvA tetramer per ATP hydrolyzed, thus driving DNA branch migration. The RuvB motors rotate together with the DNA substrate, which together with the progressing nucleotide cycle form the mechanistic basis for DNA recombination by continuous HJ branch migration. Branch migration allows RuvC to scan DNA until it finds its consensus sequence, where it cleaves and resolves cruciform DNA. The chain is Holliday junction branch migration complex subunit RuvB from Methylibium petroleiphilum (strain ATCC BAA-1232 / LMG 22953 / PM1).